The following is a 260-amino-acid chain: Snake venom serine protease homolog (260 aa).

The signal sequence occupies residues 1-18 (MVLVRVLANLLMLQLSYA). A propeptide spanning residues 19-24 (QKSSEL) is cleaved from the precursor. Residues 25–251 (IIGGDECNIN…HLNWIQSIIA (227 aa)) form the Peptidase S1 domain. 6 cysteine pairs are disulfide-bonded: cysteine 31–cysteine 165, cysteine 52–cysteine 68, cysteine 100–cysteine 258, cysteine 144–cysteine 212, cysteine 176–cysteine 191, and cysteine 202–cysteine 227. 2 N-linked (GlcNAc...) asparagine glycosylation sites follow: asparagine 123 and asparagine 124. Residue asparagine 253 is glycosylated (N-linked (GlcNAc...) asparagine).

It belongs to the peptidase S1 family. Snake venom subfamily. In terms of tissue distribution, expressed by the venom gland.

The protein localises to the secreted. Snake venom serine protease homolog that may act in the hemostasis system of the prey. In Protobothrops jerdonii (Jerdon's pitviper), this protein is Snake venom serine protease homolog.